We begin with the raw amino-acid sequence, 536 residues long: G-protein coupled receptor Mth2 (536 aa).

5 cysteine pairs are disulfide-bonded: Cys-17–Cys-71, Cys-73–Cys-78, Cys-82–Cys-177, Cys-83–Cys-96, and Cys-138–Cys-197. 2 N-linked (GlcNAc...) asparagine glycosylation sites follow: Asn-24 and Asn-33. 5 N-linked (GlcNAc...) asparagine glycosylation sites follow: Asn-103, Asn-113, Asn-118, Asn-159, and Asn-184. Residues 212 to 232 (YAMMFSIPFMMLTIAVYLLIP) form a helical membrane-spanning segment. At 233-241 (ELRNQHGKS) the chain is on the cytoplasmic side. The chain crosses the membrane as a helical span at residues 242-262 (LVCYLIGLTVGYSSLCYVQLY). Residues 263-273 (QVDATGVTCKV) lie on the Extracellular side of the membrane. Residues 274-294 (FGYTAYFFFMGAYMWLSVISF) traverse the membrane as a helical segment. The Cytoplasmic segment spans residues 295–314 (DLWHNFRGTRGINRFQEKKR). Residues 315 to 335 (FLFYSLYSWGIALVFLAFTYC) form a helical membrane-spanning segment. Over 336-365 (AQQLSNLPDNLKPGIGDGVYCWLDMSNWAA) the chain is Extracellular. Residues 366–386 (MIYFYGPILAIVVANTIMFIM) traverse the membrane as a helical segment. At 387–417 (TAIKIHGVQREMARIIASENSTKNLRTEKDK) the chain is on the cytoplasmic side. A helical membrane pass occupies residues 418-438 (FGLFLRLFLIMGITWLTELIS). At 439-449 (YFVGSDKGWSK) the chain is on the extracellular side. A helical transmembrane segment spans residues 450–470 (LFYISDLANAMQGFLIFMLFV). Residues 471–536 (MKKKVKHLIT…VDPQKTTIFR (66 aa)) lie on the Cytoplasmic side of the membrane. Residues 487-506 (RDGSNQRQSQYSTKTTSSSV) are disordered. The span at 492–505 (QRQSQYSTKTTSSS) shows a compositional bias: low complexity.

Belongs to the G-protein coupled receptor 2 family. Mth subfamily. As to quaternary structure, homodimer.

The protein localises to the cell membrane. Functionally, involved in biological aging and stress response. Essential for adult survival. In Drosophila simulans (Fruit fly), this protein is G-protein coupled receptor Mth2 (mth2).